The sequence spans 166 residues: MAHGRQQDELQDITLLGNQDNTYNFDYRPDVLESFDNKHQGRDYFVKFNCPEFTSLCPITGQPDFATIYISYIPNVKMVESKSLKLYLFSFRNHGDFHEDCMNIIMNDLIELMDPHYIEVWGKFTPRGGISIDPYTNYGRPNSKYEQMAEHRLMNHDLYPEKIDNR.

The active-site Thioimide intermediate is C57. D64 acts as the Proton donor in catalysis. Residues 79-81 (VES) and 98-99 (HE) each bind substrate.

This sequence belongs to the GTP cyclohydrolase I family. QueF type 1 subfamily.

It is found in the cytoplasm. It catalyses the reaction 7-aminomethyl-7-carbaguanine + 2 NADP(+) = 7-cyano-7-deazaguanine + 2 NADPH + 3 H(+). The protein operates within tRNA modification; tRNA-queuosine biosynthesis. Functionally, catalyzes the NADPH-dependent reduction of 7-cyano-7-deazaguanine (preQ0) to 7-aminomethyl-7-deazaguanine (preQ1). The sequence is that of NADPH-dependent 7-cyano-7-deazaguanine reductase from Staphylococcus aureus (strain MRSA252).